A 266-amino-acid chain; its full sequence is Putative carbamate hydrolase RutD (266 aa).

The 225-residue stretch at 14-238 folds into the AB hydrolase-1 domain; that stretch reads PVVVLSAGLG…RVEMPWGGHA (225 aa).

Belongs to the AB hydrolase superfamily. Hydrolase RutD family.

The catalysed reaction is carbamate + 2 H(+) = NH4(+) + CO2. In terms of biological role, involved in pyrimidine catabolism. May facilitate the hydrolysis of carbamate, a reaction that can also occur spontaneously. The polypeptide is Putative carbamate hydrolase RutD (Klebsiella pneumoniae (strain 342)).